The sequence spans 789 residues: Polyribonucleotide nucleotidyltransferase (789 aa).

Positions 494 and 500 each coordinate Mg(2+). The KH domain maps to 561 to 620 (PRIESIFINKDKIRNVIGSGGKNIREICEKTGARVEIMQDGTVMIYAINNDAVEYAKNMI). In terms of domain architecture, S1 motif spans 630–697 (GKVFDGTVIE…DREYVQLSMR (68 aa)). The tract at residues 709–789 (GELYNIRKTN…NEVPRKPRFF (81 aa)) is disordered. Basic residues predominate over residues 737–749 (SEKKRRGSGRSRR). Low complexity predominate over residues 763-780 (NNGFGNGNRSFNDNRNGN).

The protein belongs to the polyribonucleotide nucleotidyltransferase family. The cofactor is Mg(2+).

The protein localises to the cytoplasm. The catalysed reaction is RNA(n+1) + phosphate = RNA(n) + a ribonucleoside 5'-diphosphate. In terms of biological role, involved in mRNA degradation. Catalyzes the phosphorolysis of single-stranded polyribonucleotides processively in the 3'- to 5'-direction. In Ehrlichia ruminantium (strain Welgevonden), this protein is Polyribonucleotide nucleotidyltransferase.